The chain runs to 274 residues: Dermonecrotic toxin SdSicTox-betaIIB1bvii (274 aa).

His-5 is an active-site residue. Glu-25 and Asp-27 together coordinate Mg(2+). The active-site Nucleophile is His-41. Disulfide bonds link Cys-45–Cys-51 and Cys-47–Cys-190. Asp-85 serves as a coordination point for Mg(2+).

It belongs to the arthropod phospholipase D family. Class II subfamily. The cofactor is Mg(2+). In terms of tissue distribution, expressed by the venom gland.

It is found in the secreted. The enzyme catalyses an N-(acyl)-sphingosylphosphocholine = an N-(acyl)-sphingosyl-1,3-cyclic phosphate + choline. It carries out the reaction an N-(acyl)-sphingosylphosphoethanolamine = an N-(acyl)-sphingosyl-1,3-cyclic phosphate + ethanolamine. It catalyses the reaction a 1-acyl-sn-glycero-3-phosphocholine = a 1-acyl-sn-glycero-2,3-cyclic phosphate + choline. The catalysed reaction is a 1-acyl-sn-glycero-3-phosphoethanolamine = a 1-acyl-sn-glycero-2,3-cyclic phosphate + ethanolamine. Its function is as follows. Dermonecrotic toxins cleave the phosphodiester linkage between the phosphate and headgroup of certain phospholipids (sphingolipid and lysolipid substrates), forming an alcohol (often choline) and a cyclic phosphate. This toxin acts on sphingomyelin (SM). It may also act on ceramide phosphoethanolamine (CPE), lysophosphatidylcholine (LPC) and lysophosphatidylethanolamine (LPE), but not on lysophosphatidylserine (LPS), and lysophosphatidylglycerol (LPG). It acts by transphosphatidylation, releasing exclusively cyclic phosphate products as second products. Induces dermonecrosis, hemolysis, increased vascular permeability, edema, inflammatory response, and platelet aggregation. This is Dermonecrotic toxin SdSicTox-betaIIB1bvii from Sicarius cf. damarensis (strain GJB-2008) (Six-eyed sand spider).